The following is a 105-amino-acid chain: Urease subunit beta (105 aa).

It belongs to the urease beta subunit family. Heterotrimer of UreA (gamma), UreB (beta) and UreC (alpha) subunits. Three heterotrimers associate to form the active enzyme.

Its subcellular location is the cytoplasm. The catalysed reaction is urea + 2 H2O + H(+) = hydrogencarbonate + 2 NH4(+). It participates in nitrogen metabolism; urea degradation; CO(2) and NH(3) from urea (urease route): step 1/1. The polypeptide is Urease subunit beta (Marinomonas sp. (strain MWYL1)).